The following is a 189-amino-acid chain: Probable transcriptional regulator Rv1176c (189 aa).

Belongs to the PadR family. In terms of assembly, homodimer.

It localises to the cytoplasm. Functionally, probable transcriptional regulator that may help mitigate the effect of oxidative stress and help mycobacteria survive inside macrophages. Binds to its own promoter region. This chain is Probable transcriptional regulator Rv1176c, found in Mycobacterium tuberculosis (strain ATCC 25618 / H37Rv).